We begin with the raw amino-acid sequence, 393 residues long: MSHYGGNPRGNSSHQFGRKDFQQSDSKHIPKITGQPLPNEVQIPFDNMIYETRNPPKFEKQAKFISEYCINYDRKLQLGRMRAKKFHDKLPPNNLSLDLGKGFETFDPKEGDEKIIMLLEWINQMAPEGGRLKKVIHEADVVCWRGLITKICSTIYNKEEGWRIDAIKRKGVIFLCEEKTEQAKNRDLNQTDLDKRMSYWGHKFEQYVTLDDDAEQPDTSSPVTTKEEYAVVFRNDLQTDQRLNPEKRSIGIFYSGEVDCLDRHGNMLELKTQKGELGHGFYKYSKSFKWWLQSSLVNVDHIIVGLRTQEGHVKSLTSLRTREIPQRASWNFRAGFEFLSTIFTYILNCLEKDGDACVIEYRSEMGIHKGIQMRRVPVDEFDFVPNEFLEKFC.

Residues 1–37 form a disordered region; sequence MSHYGGNPRGNSSHQFGRKDFQQSDSKHIPKITGQPL. Basic and acidic residues predominate over residues 17–28; the sequence is GRKDFQQSDSKH. Substrate is bound by residues arginine 74, glutamate 113, and 144-146; that span reads WRG. 5 residues coordinate Mg(2+): glutamate 205, glutamate 257, aspartate 259, glutamate 269, and leucine 270. Residue glutamate 257 coordinates substrate. Residues lysine 271 and glutamine 293 each contribute to the substrate site.

The protein belongs to the DXO/Dom3Z family. Mg(2+) serves as cofactor.

The catalysed reaction is a 5'-end NAD(+)-phospho-ribonucleoside in mRNA + H2O = a 5'-end phospho-ribonucleoside in mRNA + NAD(+) + H(+). It catalyses the reaction a 5'-end (N(7)-methyl 5'-triphosphoguanosine)-ribonucleoside-ribonucleotide in mRNA + H2O = a (N(7)-methyl 5'-triphosphoguanosine)-nucleoside + a 5'-end phospho-ribonucleoside in mRNA + H(+). The enzyme catalyses a 5'-end triphospho-ribonucleoside in mRNA + H2O = a 5'-end phospho-ribonucleoside in mRNA + diphosphate + H(+). In terms of biological role, decapping enzyme for NAD-capped RNAs: specifically hydrolyzes the nicotinamide adenine dinucleotide (NAD) cap from a subset of RNAs by removing the entire NAD moiety from the 5'-end of an NAD-capped RNA. The NAD-cap is present at the 5'-end of some RNAs and snoRNAs. In contrast to the canonical 5'-end N7 methylguanosine (m7G) cap, the NAD cap promotes mRNA decay. Also acts as a non-canonical decapping enzyme that removes the entire cap structure of m7G capped or incompletely capped RNAs and mediates their subsequent degradation. Specifically degrades pre-mRNAs with a defective 5'-end m7G cap and is part of a pre-mRNA capping quality control. Also possesses RNA 5'-pyrophosphohydrolase activity by hydrolyzing the 5'-end triphosphate to release pyrophosphates. The chain is Decapping nuclease dom-3 from Caenorhabditis elegans.